Consider the following 163-residue polypeptide: NADH-quinone oxidoreductase subunit I (163 aa).

2 consecutive 4Fe-4S ferredoxin-type domains span residues 55-84 (RRYPSGEERCIACKLCEAICPAQAITIEAE) and 94-123 (TRYDIDMVKCIYCGLCQEACPVDAIVEGPN). Residues C64, C67, C70, C74, C103, C106, C109, and C113 each coordinate [4Fe-4S] cluster.

Belongs to the complex I 23 kDa subunit family. As to quaternary structure, NDH-1 is composed of 14 different subunits. Subunits NuoA, H, J, K, L, M, N constitute the membrane sector of the complex. [4Fe-4S] cluster serves as cofactor.

Its subcellular location is the cell inner membrane. The catalysed reaction is a quinone + NADH + 5 H(+)(in) = a quinol + NAD(+) + 4 H(+)(out). NDH-1 shuttles electrons from NADH, via FMN and iron-sulfur (Fe-S) centers, to quinones in the respiratory chain. The immediate electron acceptor for the enzyme in this species is believed to be ubiquinone. Couples the redox reaction to proton translocation (for every two electrons transferred, four hydrogen ions are translocated across the cytoplasmic membrane), and thus conserves the redox energy in a proton gradient. This is NADH-quinone oxidoreductase subunit I from Caulobacter vibrioides (strain ATCC 19089 / CIP 103742 / CB 15) (Caulobacter crescentus).